The sequence spans 233 residues: Large ribosomal subunit protein uL1 (233 aa).

The protein belongs to the universal ribosomal protein uL1 family. In terms of assembly, part of the 50S ribosomal subunit.

Binds directly to 23S rRNA. The L1 stalk is quite mobile in the ribosome, and is involved in E site tRNA release. In terms of biological role, protein L1 is also a translational repressor protein, it controls the translation of the L11 operon by binding to its mRNA. This is Large ribosomal subunit protein uL1 from Geotalea uraniireducens (strain Rf4) (Geobacter uraniireducens).